An 896-amino-acid polypeptide reads, in one-letter code: Bifunctional glutamine synthetase adenylyltransferase/adenylyl-removing enzyme (896 aa).

The tract at residues 1 to 411 (MSDNRLDTAR…LFNEILSEPE (411 aa)) is adenylyl removase. The tract at residues 417–896 (NSEWQWAWQD…EVFGEEAATV (480 aa)) is adenylyl transferase.

It belongs to the GlnE family. Mg(2+) is required as a cofactor.

It catalyses the reaction [glutamine synthetase]-O(4)-(5'-adenylyl)-L-tyrosine + phosphate = [glutamine synthetase]-L-tyrosine + ADP. The catalysed reaction is [glutamine synthetase]-L-tyrosine + ATP = [glutamine synthetase]-O(4)-(5'-adenylyl)-L-tyrosine + diphosphate. In terms of biological role, involved in the regulation of glutamine synthetase GlnA, a key enzyme in the process to assimilate ammonia. When cellular nitrogen levels are high, the C-terminal adenylyl transferase (AT) inactivates GlnA by covalent transfer of an adenylyl group from ATP to specific tyrosine residue of GlnA, thus reducing its activity. Conversely, when nitrogen levels are low, the N-terminal adenylyl removase (AR) activates GlnA by removing the adenylyl group by phosphorolysis, increasing its activity. The regulatory region of GlnE binds the signal transduction protein PII (GlnB) which indicates the nitrogen status of the cell. This Neisseria meningitidis serogroup B (strain ATCC BAA-335 / MC58) protein is Bifunctional glutamine synthetase adenylyltransferase/adenylyl-removing enzyme.